A 221-amino-acid polypeptide reads, in one-letter code: SIN3-HDAC complex-associated factor (221 aa).

Positions 112 to 121 are enriched in basic and acidic residues; that stretch reads QKEFKRHNSD. Disordered regions lie at residues 112-152 and 201-221; these read QKEF…MASG and AAAE…TQEW. Residues 124–135 show a composition bias toward low complexity; sequence STTSSASPAQSP. Residues 136 to 152 show a composition bias toward polar residues; sequence CYSNQSDDGSDTEMASG.

Belongs to the SINHCAF family. In terms of assembly, interacts with the Sin3/HDAC corepressor complex at least composed of BRMS1, BRMS1L, ING2, SAP30, SAP30L and HDAC1. Found in a complex composed of at least SINHCAF, SIN3A, HDAC1, SAP30, RBBP4, OGT and TET1. Interacts with SIN3A and OGT.

It localises to the nucleus. In terms of biological role, subunit of the Sin3 deacetylase complex (Sin3/HDAC), this subunit is important for the repression of genes encoding components of the TGF-beta signaling pathway. Core component of a SIN3A complex (composed of at least SINHCAF, SIN3A, HDAC1, SAP30, RBBP4, OGT and TET1) present in embryonic stem (ES) cells. Promotes the stability of SIN3A and its presence on chromatin and is essential for maintaining the potential of ES cells to proliferate rapidly, while ensuring a short G1-phase of the cell cycle, thereby preventing premature lineage priming. This Homo sapiens (Human) protein is SIN3-HDAC complex-associated factor.